The primary structure comprises 263 residues: Caveolae-associated protein 3 (263 aa).

The interaction with CAVIN1 stretch occupies residues 1–84 (MGESALEPGP…SNTLAQLLAK (84 aa)). Residues 20-78 (VHAVTVVTLLEKLATMLEALRERQGGLAERQGGLAGSVRRIQSGLGALSRSHDTTSNTL) are leucine-zipper. A phosphoserine mark is found at Ser-62 and Ser-70. A Glycyl lysine isopeptide (Lys-Gly) (interchain with G-Cter in SUMO2) cross-link involves residue Lys-128. The interval 135–203 (ARAFQKAPEL…SSRKGSEAAQ (69 aa)) is interaction with CAV1. A disordered region spans residues 141–263 (APELLGPEDQ…RPVLQIESAA (123 aa)). Residues 157–170 (QPEDEVGESSDEEP) show a composition bias toward acidic residues. Ser-165, Ser-166, Ser-173, and Ser-199 each carry phosphoserine. Low complexity predominate over residues 219 to 234 (EGPAEGQPAAQPAMEP).

The protein belongs to the CAVIN family. Component of the CAVIN complex composed of CAVIN1, CAVIN2, CAVIN3 and CAVIN4. Interacts with PRKCD and with phosphatidylserine. Phosphatidylserine may form a bridge between PKC and PKC-binding partners and stabilize the binding. Interacts with PER2. Interacts with CAVIN1 and EPS15L1. Interacts (via leucine-zipper domain) with CAV1 in a cholesterol-sensitive manner. In vitro, phosphorylated by PRKCD.

The protein resides in the cytoplasm. It localises to the membrane. The protein localises to the caveola. Its subcellular location is the cytosol. Regulates the traffic and/or budding of caveolae. Plays a role in caveola formation in a tissue-specific manner. Required for the formation of caveolae in smooth muscle but not in the lung and heart endothelial cells. Regulates the equilibrium between cell surface-associated and cell surface-dissociated caveolae by promoting the rapid release of caveolae from the cell surface. Plays a role in the regulation of the circadian clock. Modulates the period length and phase of circadian gene expression and also regulates expression and interaction of the core clock components PER1/2 and CRY1/2. Seems to have an immune potentiation function, especially in the glioma. The protein is Caveolae-associated protein 3 of Rattus norvegicus (Rat).